The following is a 354-amino-acid chain: Methionine import ATP-binding protein MetN 2 (354 aa).

The ABC transporter domain occupies 6 to 250 (IELKNISVHF…PQKPLTKEFI (245 aa)). 42–49 (GYSGAGKS) serves as a coordination point for ATP.

It belongs to the ABC transporter superfamily. Methionine importer (TC 3.A.1.24) family. As to quaternary structure, the complex is composed of two ATP-binding proteins (MetN), two transmembrane proteins (MetI) and a solute-binding protein (MetQ).

Its subcellular location is the cell membrane. The catalysed reaction is L-methionine(out) + ATP + H2O = L-methionine(in) + ADP + phosphate + H(+). It carries out the reaction D-methionine(out) + ATP + H2O = D-methionine(in) + ADP + phosphate + H(+). Its function is as follows. Part of the ABC transporter complex MetNIQ involved in methionine import. Responsible for energy coupling to the transport system. The polypeptide is Methionine import ATP-binding protein MetN 2 (Oenococcus oeni (strain ATCC BAA-331 / PSU-1)).